A 1299-amino-acid chain; its full sequence is Outer capsid protein VP1 (1299 aa).

This sequence belongs to the aquareoviridae outer capsid VP1 protein family.

Its subcellular location is the virion. It carries out the reaction a 5'-end diphospho-ribonucleoside in mRNA + GTP + H(+) = a 5'-end (5'-triphosphoguanosine)-ribonucleoside in mRNA + diphosphate. It catalyses the reaction a 5'-end (5'-triphosphoguanosine)-ribonucleoside in mRNA + S-adenosyl-L-methionine = a 5'-end (N(7)-methyl 5'-triphosphoguanosine)-ribonucleoside in mRNA + S-adenosyl-L-homocysteine. Outer capsid protein involved in mRNA capping. Catalyzes the last 3 enzymatic activities for formation of the 5' cap structure on the viral plus-strand transcripts, namely the RNA guanylyltransferase, RNA-7N- and RNA-2'O-methyltransferase activities. This Aquareovirus C (isolate Golden shiner/USA/GSRV/1977) (AQRV-C) protein is Outer capsid protein VP1 (S1).